The sequence spans 371 residues: Chaperone protein DnaJ (371 aa).

The J domain maps to Asp-5 to Gly-69. The segment at Gly-127–Pro-205 adopts a CR-type zinc-finger fold. Zn(2+)-binding residues include Cys-140, Cys-143, Cys-157, Cys-160, Cys-179, Cys-182, Cys-193, and Cys-196. CXXCXGXG motif repeat units lie at residues Cys-140–Gly-147, Cys-157–Gly-164, Cys-179–Gly-186, and Cys-193–Gly-200.

It belongs to the DnaJ family. In terms of assembly, homodimer. Zn(2+) is required as a cofactor.

The protein localises to the cytoplasm. In terms of biological role, participates actively in the response to hyperosmotic and heat shock by preventing the aggregation of stress-denatured proteins and by disaggregating proteins, also in an autonomous, DnaK-independent fashion. Unfolded proteins bind initially to DnaJ; upon interaction with the DnaJ-bound protein, DnaK hydrolyzes its bound ATP, resulting in the formation of a stable complex. GrpE releases ADP from DnaK; ATP binding to DnaK triggers the release of the substrate protein, thus completing the reaction cycle. Several rounds of ATP-dependent interactions between DnaJ, DnaK and GrpE are required for fully efficient folding. Also involved, together with DnaK and GrpE, in the DNA replication of plasmids through activation of initiation proteins. This chain is Chaperone protein DnaJ, found in Hamiltonella defensa subsp. Acyrthosiphon pisum (strain 5AT).